The sequence spans 649 residues: MHGLLLAGLLALPSNVLGHPAEPPNSVNVTHRHIDTSAYFLPQLSLYNKSEDVAEYGGDNITGSSYSGGDHSASNLSSEDYVTVATSLLKATLPYASFRLIDDHYIGDSGIGHVHFRQTVYGIDIDNTDFNVNVGRDGKVFSYGSSFYEGEIPKANPVAKRDFSDPVNALIGAINTLNIPVTAAVGEVKTTPIEGNSTYMFKGTTGALTDPTAQLVYLQKDGGLHLTWRVETDVGDNWLLTYVDAKKNDQVHGVVDYVASAEYQVYPWGVNDPTDGERAHLYFPWFKTGSRNWHIDGRGWHTTTRGNNAIAQDNPSGGWEYEDNHRPTNPLLIFRYPYTQSMTPPASYRDASITQLFYTGNVYHDLLYILGFNEKAGNFQVNNWGKGGKGNDFTILNTQDGSGVNNANFATPPDGQPGRMRMYVWDTSTPYRDGSFEAGIVIHEYTHGVSNRLTGGPANSRCLSSLESGGMGEGWSDFFATVVHLKERDTRNKNYTIGEWASGRQGGIRKYPYSTDLHTNPLMYVDADGLESVHAIGTIWCTILNEVLWNLIERHGMGNVNKIKPTFKDGVPTDGRNLAMKLVLDGMALQPCLPNFVQARDAIIDADMNLTKGANRCELWKAFAKRGLGVGAAYNPEKRVGSSRVPGGC.

The signal sequence occupies residues 1–18 (MHGLLLAGLLALPSNVLG). A propeptide spanning residues 19–260 (HPAEPPNSVN…VHGVVDYVAS (242 aa)) is cleaved from the precursor. His443 lines the Zn(2+) pocket. Glu444 is an active-site residue. His447 lines the Zn(2+) pocket. N-linked (GlcNAc...) asparagine glycosylation is found at Asn494 and Asn609.

It belongs to the peptidase M36 family. Zn(2+) serves as cofactor.

It localises to the secreted. Its function is as follows. Secreted metalloproteinase probably acting as a virulence factor. The sequence is that of Extracellular metalloproteinase 4 (MEP4) from Arthroderma otae (strain ATCC MYA-4605 / CBS 113480) (Microsporum canis).